We begin with the raw amino-acid sequence, 186 residues long: ADP compounds hydrolase NudE (186 aa).

Glu-40 contributes to the substrate binding site. In terms of domain architecture, Nudix hydrolase spans Thr-45 to Ala-172. The Nudix box motif lies at Gly-80 to Gly-101. Residues Glu-95 and Glu-99 each coordinate a divalent metal cation. Ser-118 provides a ligand contact to substrate.

Belongs to the Nudix hydrolase family. In terms of assembly, homodimer. Mg(2+) is required as a cofactor.

It carries out the reaction ADP-D-ribose + H2O = D-ribose 5-phosphate + AMP + 2 H(+). Functionally, active on adenosine(5')triphospho(5')adenosine (Ap3A), ADP-ribose, NADH, adenosine(5')diphospho(5')adenosine (Ap2A). In Escherichia coli (strain K12), this protein is ADP compounds hydrolase NudE (nudE).